A 133-amino-acid polypeptide reads, in one-letter code: Small ribosomal subunit protein uS12 (133 aa).

Asp89 carries the post-translational modification 3-methylthioaspartic acid. Residues 103–133 (DTAGVAGRTQRRSKYGAKRPKPGQAAPAKKK) are disordered. Residues 111–123 (TQRRSKYGAKRPK) show a composition bias toward basic residues. The segment covering 124–133 (PGQAAPAKKK) has biased composition (low complexity).

It belongs to the universal ribosomal protein uS12 family. As to quaternary structure, part of the 30S ribosomal subunit. Contacts proteins S8 and S17. May interact with IF1 in the 30S initiation complex.

In terms of biological role, with S4 and S5 plays an important role in translational accuracy. Its function is as follows. Interacts with and stabilizes bases of the 16S rRNA that are involved in tRNA selection in the A site and with the mRNA backbone. Located at the interface of the 30S and 50S subunits, it traverses the body of the 30S subunit contacting proteins on the other side and probably holding the rRNA structure together. The combined cluster of proteins S8, S12 and S17 appears to hold together the shoulder and platform of the 30S subunit. In Bacteroides thetaiotaomicron (strain ATCC 29148 / DSM 2079 / JCM 5827 / CCUG 10774 / NCTC 10582 / VPI-5482 / E50), this protein is Small ribosomal subunit protein uS12.